The following is a 63-amino-acid chain: Beta-defensin 4 (63 aa).

The signal sequence occupies residues 1–22 (MRLHHLLLAVLFLVLSAGSGFT). Pyrrolidone carboxylic acid is present on glutamine 23. 3 disulfide bridges follow: cysteine 31–cysteine 60, cysteine 38–cysteine 53, and cysteine 43–cysteine 61.

Belongs to the beta-defensin family. In terms of tissue distribution, neutrophilic granules.

It is found in the secreted. Functionally, has bactericidal activity. Active against E.coli ML35 and S.aureus 502A. In Bos taurus (Bovine), this protein is Beta-defensin 4 (DEFB4).